The following is a 225-amino-acid chain: NAD(P)H-quinone oxidoreductase subunit K, chloroplastic (225 aa).

[4Fe-4S] cluster contacts are provided by Cys-43, Cys-44, Cys-108, and Cys-139.

It belongs to the complex I 20 kDa subunit family. NDH is composed of at least 16 different subunits, 5 of which are encoded in the nucleus. [4Fe-4S] cluster is required as a cofactor.

The protein resides in the plastid. It is found in the chloroplast thylakoid membrane. It carries out the reaction a plastoquinone + NADH + (n+1) H(+)(in) = a plastoquinol + NAD(+) + n H(+)(out). The catalysed reaction is a plastoquinone + NADPH + (n+1) H(+)(in) = a plastoquinol + NADP(+) + n H(+)(out). In terms of biological role, NDH shuttles electrons from NAD(P)H:plastoquinone, via FMN and iron-sulfur (Fe-S) centers, to quinones in the photosynthetic chain and possibly in a chloroplast respiratory chain. The immediate electron acceptor for the enzyme in this species is believed to be plastoquinone. Couples the redox reaction to proton translocation, and thus conserves the redox energy in a proton gradient. This chain is NAD(P)H-quinone oxidoreductase subunit K, chloroplastic, found in Vitis vinifera (Grape).